A 206-amino-acid chain; its full sequence is Small ribosomal subunit protein uS4 (206 aa).

Residues 29–52 (LDKRPYAPGQHGQRRGRGRPSDYS) are disordered. The S4 RNA-binding domain occupies 96-171 (RRLDNVVFRM…QKRRRVSPWV (76 aa)).

This sequence belongs to the universal ribosomal protein uS4 family. As to quaternary structure, part of the 30S ribosomal subunit. Contacts protein S5. The interaction surface between S4 and S5 is involved in control of translational fidelity.

One of the primary rRNA binding proteins, it binds directly to 16S rRNA where it nucleates assembly of the body of the 30S subunit. Its function is as follows. With S5 and S12 plays an important role in translational accuracy. This is Small ribosomal subunit protein uS4 from Deinococcus deserti (strain DSM 17065 / CIP 109153 / LMG 22923 / VCD115).